Reading from the N-terminus, the 509-residue chain is MIFELILISIVTYYFWHWTFWKRRGLPGPWGVPIFGKAGAMLEDSFPPGYTLQKWTKEYGKIYGFTEGMQKVMVISDPDLVQEILVKQYDNFYGRKHNPVQGDPDKDKDIHIVGAQGFRWKRLRTITAPAFSNGSIKKVLTTMEDSTQELMKKLREESENGKAVNMHLFYQEYTFDVISRVAMGQPDSQMFKNPLLKDVKGFFEHNRWQIWMFSGGFPFAVSFLKWLFIKVGKFGAGPFIVVQKSVTDAVMSRIAQREADKKHGVEPGEAADYIDMFLNARAEVEHFGESNDEFHKSSSYNNRQLTTQEIISQCFVFLVAGFDTTAISLSYVTYFLALNPKIQSKLQDEVDKECPNDEITFDQLSKLKYMDNVIKESLRLFPFASFANSRRCMRNTVIGEQIVEAGVDVMIDTWTLHHDKNVWGNDVEEFKPERWDSPLTPQQAYLSFGAGPRVCLGMRFALLEQKGLLSHILKKYTFETNAKTQLPIKLVGRATARPENLFLSLKPRV.

Cys455 is a heme binding site.

Belongs to the cytochrome P450 family. It depends on heme as a cofactor.

Cytochromes P450 are a group of heme-thiolate monooxygenases. They oxidize a variety of structurally unrelated compounds, including steroids, fatty acids, and xenobiotics. This is Putative cytochrome P450 CYP13A8 (cyp-13A8) from Caenorhabditis elegans.